A 202-amino-acid polypeptide reads, in one-letter code: Orotate phosphoribosyltransferase (202 aa).

Residues lysine 93 and 113 to 121 (EDIITTGGS) each bind 5-phospho-alpha-D-ribose 1-diphosphate. 2 residues coordinate orotate: threonine 117 and arginine 145.

This sequence belongs to the purine/pyrimidine phosphoribosyltransferase family. PyrE subfamily. Homodimer. Mg(2+) is required as a cofactor.

It carries out the reaction orotidine 5'-phosphate + diphosphate = orotate + 5-phospho-alpha-D-ribose 1-diphosphate. The protein operates within pyrimidine metabolism; UMP biosynthesis via de novo pathway; UMP from orotate: step 1/2. Catalyzes the transfer of a ribosyl phosphate group from 5-phosphoribose 1-diphosphate to orotate, leading to the formation of orotidine monophosphate (OMP). In Campylobacter jejuni subsp. jejuni serotype O:23/36 (strain 81-176), this protein is Orotate phosphoribosyltransferase.